Here is a 395-residue protein sequence, read N- to C-terminus: Transmembrane protein 79 (395 aa).

Residues 1-115 (MTEPETLALL…PPTKLEELPE (115 aa)) form a disordered region. Residues 1-204 (MTEPETLALL…GREALRAVAS (204 aa)) are Cytoplasmic-facing. A helical membrane pass occupies residues 205–225 (VGAALILFPCLLYGAYAFLPF). Over 226-244 (DAPRLPTMSSRLIYTLRCG) the chain is Extracellular. Residues 245–265 (VFATFPIVLGILVYGLSLLCF) traverse the membrane as a helical segment. Topologically, residues 266–290 (AALRPFGEPRREVEIHRQYVAQSVQ) are cytoplasmic. Residues 291–311 (LFILYFFNLAVLSTYLPQDAL) traverse the membrane as a helical segment. Residues 312–313 (KL) lie on the Extracellular side of the membrane. The chain crosses the membrane as a helical span at residues 314–334 (LPLLTGLFAISRLIYWLTFAV). Topologically, residues 335 to 343 (GRSFRGFGY) are cytoplasmic. A helical transmembrane segment spans residues 344 to 364 (GLTFLPLLSMLLWNFYYMFVV). The Extracellular portion of the chain corresponds to 365–395 (EPERMLTASESRLDYPDHARSASDYRPRSRG).

The protein localises to the lysosome. Its subcellular location is the golgi apparatus. The protein resides in the trans-Golgi network. It localises to the membrane. In terms of biological role, contributes to the epidermal integrity and skin barrier function. Plays a role in the lamellar granule (LG) secretory system and in the stratum corneum (SC) epithelial cell formation. The sequence is that of Transmembrane protein 79 (TMEM79) from Bos taurus (Bovine).